A 113-amino-acid chain; its full sequence is Ig heavy chain V-III region ABE-47N (113 aa).

Residues 1–113 enclose the Ig-like domain; the sequence is EVKLEESGGG…YWGQGTLVTV (113 aa). Cys-22 and Cys-98 are oxidised to a cystine.

This Mus musculus (Mouse) protein is Ig heavy chain V-III region ABE-47N.